The primary structure comprises 275 residues: Dermonecrotic toxin LhSicTox-alphaVI1i (275 aa).

H5 is a catalytic residue. Positions 25 and 27 each coordinate Mg(2+). H41 functions as the Nucleophile in the catalytic mechanism. Intrachain disulfides connect C45–C51 and C47–C192. D85 serves as a coordination point for Mg(2+).

It belongs to the arthropod phospholipase D family. Class II subfamily. Requires Mg(2+) as cofactor. In terms of tissue distribution, expressed by the venom gland.

It localises to the secreted. The enzyme catalyses an N-(acyl)-sphingosylphosphocholine = an N-(acyl)-sphingosyl-1,3-cyclic phosphate + choline. The catalysed reaction is an N-(acyl)-sphingosylphosphoethanolamine = an N-(acyl)-sphingosyl-1,3-cyclic phosphate + ethanolamine. It catalyses the reaction a 1-acyl-sn-glycero-3-phosphocholine = a 1-acyl-sn-glycero-2,3-cyclic phosphate + choline. It carries out the reaction a 1-acyl-sn-glycero-3-phosphoethanolamine = a 1-acyl-sn-glycero-2,3-cyclic phosphate + ethanolamine. Its function is as follows. Dermonecrotic toxins cleave the phosphodiester linkage between the phosphate and headgroup of certain phospholipids (sphingolipid and lysolipid substrates), forming an alcohol (often choline) and a cyclic phosphate. This toxin acts on sphingomyelin (SM). It may also act on ceramide phosphoethanolamine (CPE), lysophosphatidylcholine (LPC) and lysophosphatidylethanolamine (LPE), but not on lysophosphatidylserine (LPS), and lysophosphatidylglycerol (LPG). It acts by transphosphatidylation, releasing exclusively cyclic phosphate products as second products. Induces dermonecrosis, hemolysis, increased vascular permeability, edema, inflammatory response, and platelet aggregation. The protein is Dermonecrotic toxin LhSicTox-alphaVI1i of Loxosceles hirsuta (Recluse spider).